A 57-amino-acid chain; its full sequence is uncharacterized protein (57 aa).

2 helical membrane-spanning segments follow: residues 2–22 (LLVV…LRSV) and 29–49 (GFLL…MTVI).

It localises to the cell membrane. This is an uncharacterized protein from Bacillus subtilis (strain 168).